The following is a 290-amino-acid chain: Nucleotide-binding protein Bpet0443 (290 aa).

Position 9 to 16 (9 to 16 (GISGSGKS)) interacts with ATP. Residue 58–61 (DVRS) coordinates GTP.

The protein belongs to the RapZ-like family.

In terms of biological role, displays ATPase and GTPase activities. This Bordetella petrii (strain ATCC BAA-461 / DSM 12804 / CCUG 43448) protein is Nucleotide-binding protein Bpet0443.